The sequence spans 736 residues: 1,4-alpha-glucan branching enzyme GlgB (736 aa).

The active-site Nucleophile is the D417. Residue E470 is the Proton donor of the active site.

This sequence belongs to the glycosyl hydrolase 13 family. GlgB subfamily. As to quaternary structure, monomer.

The catalysed reaction is Transfers a segment of a (1-&gt;4)-alpha-D-glucan chain to a primary hydroxy group in a similar glucan chain.. It participates in glycan biosynthesis; glycogen biosynthesis. Catalyzes the formation of the alpha-1,6-glucosidic linkages in glycogen by scission of a 1,4-alpha-linked oligosaccharide from growing alpha-1,4-glucan chains and the subsequent attachment of the oligosaccharide to the alpha-1,6 position. In Pseudomonas putida (strain ATCC 47054 / DSM 6125 / CFBP 8728 / NCIMB 11950 / KT2440), this protein is 1,4-alpha-glucan branching enzyme GlgB.